The chain runs to 472 residues: Transmembrane protein 8B (472 aa).

The span at 1-10 (MNMPQSLGTQ) shows a compositional bias: low complexity. Residues 1-24 (MNMPQSLGTQPLPPEPPSLGTPIE) form a disordered region. Residues 1–233 (MNMPQSLGTQ…ADALTYGFQL (233 aa)) are Extracellular-facing. A glycan (N-linked (GlcNAc...) asparagine) is linked at Asn-100. The EGF-like domain maps to 182-221 (FLSPCVDDCGPYGQCKLLRTHNYLYAACECKAGWRGWGCT). Intrachain disulfides connect Cys-186-Cys-196, Cys-190-Cys-209, and Cys-211-Cys-220. Residues 234–254 (LSTLLLCLSNLMFLPPVVLAI) traverse the membrane as a helical segment. Residues 255 to 257 (RSR) are Cytoplasmic-facing. A helical membrane pass occupies residues 258 to 277 (YVLEAAVYTFTMFFSTFYHA). Over 278–292 (CDQPGIVVFCIMDYD) the chain is Extracellular. The chain crosses the membrane as a helical span at residues 293-313 (VLQFCDFLGSLMSVWVTVIAM). Residues 314 to 315 (AR) are Cytoplasmic-facing. The chain crosses the membrane as a helical span at residues 316–336 (LQPVIKQVLYLLGAMLLSMAL). Residues 337–342 (QLDRHG) are Extracellular-facing. The chain crosses the membrane as a helical span at residues 343–363 (LWNLLGPSLFALGILATAWTV). At 364-379 (RSVRRRHCYPPTWRRW) the chain is on the cytoplasmic side. The chain crosses the membrane as a helical span at residues 380–400 (LFYLCPGSLIAGSAVLLYAFV). Residues 401–405 (ETRDN) lie on the Extracellular side of the membrane. The chain crosses the membrane as a helical span at residues 406–426 (YFYIHSIWHMLIAGSVGFLLP). Residues 427–472 (PRAKTDRRVPSGARARGCGYQLCINEQEELGLVGPGGTTVSSICVS) are Cytoplasmic-facing.

It belongs to the TMEM8 family. As to quaternary structure, may interact with EZR. In terms of processing, N-glycosylated.

The protein localises to the cell membrane. It localises to the cytoplasm. The protein resides in the nucleus. Its subcellular location is the mitochondrion. It is found in the endoplasmic reticulum. Its function is as follows. May function as a regulator of the EGFR pathway. Probable tumor suppressor which may function in cell growth, proliferation and adhesion. This is Transmembrane protein 8B (Tmem8b) from Mus musculus (Mouse).